A 608-amino-acid chain; its full sequence is Protoheme IX farnesyltransferase (608 aa).

Residues 1–338 (MKTPAWSRLA…DYLALTKPRV (338 aa)) form a COX15/CtaA region. The next 17 helical transmembrane spans lie at 10–30 (AGYAWGVLLWNVLVALFGAYV), 67–87 (ATSGLAFLSVLALFLWALRAF), 99–119 (LALFFMVTESLVGASLVLFGW), 139–159 (TYFLLAALALTAWWASGGGPL), 167–187 (VGLALFLGLLALLFLGMSGAV), 220–240 (VLHPLIAVSVGLYVVFAGYLV), 252–272 (LAQGLAYLYGAQLLAGLINVA), 277–297 (VWMQILHLLLAYAIWLLFVFL), 338–357 (VISLLLFTALFGALIAAKGW), 362–384 (VFLAVALGGYMMAGAANAINMVV), 411–431 (LLFAFALAVLGFAVLWWGANL), 432–452 (LAATLALMGLIWYVLVYTLYL), 460–480 (IVIGGAAGAFPPLVGWAAVTG), 488–508 (YLFALIFFWTPVHFWALALMI), 530–550 (VIQIALYALLTALISLMPLLL), 555–575 (LLYLAASLLLNALLLLKSLAL), and 584–604 (AVSLYKYSMLYLALLFAAMAV). The tract at residues 339–608 (ISLLLFTALF…FAAMAVDRAV (270 aa)) is protoheme IX prenyltransferase.

The protein in the N-terminal section; belongs to the COX15/CtaA family. In the C-terminal section; belongs to the UbiA prenyltransferase family. Protoheme IX farnesyltransferase subfamily.

The protein localises to the cell inner membrane. It carries out the reaction heme b + (2E,6E)-farnesyl diphosphate + H2O = Fe(II)-heme o + diphosphate. Its pathway is porphyrin-containing compound metabolism; heme O biosynthesis; heme O from protoheme: step 1/1. Functionally, converts heme B (protoheme IX) to heme O by substitution of the vinyl group on carbon 2 of heme B porphyrin ring with a hydroxyethyl farnesyl side group. In Thermus thermophilus (strain ATCC 27634 / DSM 579 / HB8), this protein is Protoheme IX farnesyltransferase (ctaB).